The primary structure comprises 451 residues: MSLLKSIPKVDKFIMNEAFEGLSRTLITKIAKKTLEELRNDILNNKIEKIDENTLINEVLDSYKDLTSPSLKSLINATGIIVHTNLGRSLLDEKSLTKAIKIATTYNNLEYDLKKGKRGERYEHITKSLQALTSCEDAIVVNNNASAVFLILNTFCKNKEVIVSRGELVEIGGSFRVPEVMNQSGAKLKEIGTTNKTHLRDYENAICEKTSMLMKVHKSNYSIEGFSSEVSFEVIVKIAQQNNLIDYFDMGSGHIIDLPYNLNKDEPSILDIMKYKPSLLSFSGDKLFGSVQAGIIIGKKELIAKIKKNQLLRMLRVDKITLALLEETLNSYLKNELDSIPTLKMLNTKIETLEQRANNLKEKCENFIKCEVIKTSTMVGGGTTPNKKIPTIALTLEHKNYKPNKLEEILRKNSIISRIENDKVLLDFRTILESDCKKIEEILKNLFESTK.

K286 carries the N6-(pyridoxal phosphate)lysine modification.

This sequence belongs to the SelA family. It depends on pyridoxal 5'-phosphate as a cofactor.

Its subcellular location is the cytoplasm. It carries out the reaction L-seryl-tRNA(Sec) + selenophosphate + H(+) = L-selenocysteinyl-tRNA(Sec) + phosphate. It functions in the pathway aminoacyl-tRNA biosynthesis; selenocysteinyl-tRNA(Sec) biosynthesis; selenocysteinyl-tRNA(Sec) from L-seryl-tRNA(Sec) (bacterial route): step 1/1. Converts seryl-tRNA(Sec) to selenocysteinyl-tRNA(Sec) required for selenoprotein biosynthesis. The chain is L-seryl-tRNA(Sec) selenium transferase from Aliarcobacter butzleri (strain RM4018) (Arcobacter butzleri).